A 128-amino-acid chain; its full sequence is Translation initiation factor 5A (128 aa).

A Hypusine modification is found at lysine 35.

It belongs to the eIF-5A family.

It localises to the cytoplasm. In terms of biological role, functions by promoting the formation of the first peptide bond. The protein is Translation initiation factor 5A (eIF5A) of Methanocella arvoryzae (strain DSM 22066 / NBRC 105507 / MRE50).